A 174-amino-acid polypeptide reads, in one-letter code: Ribosome maturation factor RimM (174 aa).

Residues 97–169 (GNKFYFHEVI…KVVMDLPEGL (73 aa)) enclose the PRC barrel domain.

Belongs to the RimM family. Binds ribosomal protein uS19.

The protein resides in the cytoplasm. Functionally, an accessory protein needed during the final step in the assembly of 30S ribosomal subunit, possibly for assembly of the head region. Essential for efficient processing of 16S rRNA. May be needed both before and after RbfA during the maturation of 16S rRNA. It has affinity for free ribosomal 30S subunits but not for 70S ribosomes. The chain is Ribosome maturation factor RimM from Flavobacterium psychrophilum (strain ATCC 49511 / DSM 21280 / CIP 103535 / JIP02/86).